The chain runs to 117 residues: Large ribosomal subunit protein bL19 (117 aa).

It belongs to the bacterial ribosomal protein bL19 family.

Its function is as follows. This protein is located at the 30S-50S ribosomal subunit interface and may play a role in the structure and function of the aminoacyl-tRNA binding site. The sequence is that of Large ribosomal subunit protein bL19 from Halorhodospira halophila (strain DSM 244 / SL1) (Ectothiorhodospira halophila (strain DSM 244 / SL1)).